We begin with the raw amino-acid sequence, 292 residues long: NAD kinase (292 aa).

The active-site Proton acceptor is aspartate 73. Residues 73-74 (DG), 147-148 (NE), histidine 158, arginine 175, aspartate 177, 188-193 (TGYSLS), and glutamine 247 contribute to the NAD(+) site.

The protein belongs to the NAD kinase family. The cofactor is a divalent metal cation.

The protein resides in the cytoplasm. The catalysed reaction is NAD(+) + ATP = ADP + NADP(+) + H(+). Functionally, involved in the regulation of the intracellular balance of NAD and NADP, and is a key enzyme in the biosynthesis of NADP. Catalyzes specifically the phosphorylation on 2'-hydroxyl of the adenosine moiety of NAD to yield NADP. The protein is NAD kinase of Buchnera aphidicola subsp. Acyrthosiphon pisum (strain 5A).